Consider the following 734-residue polypeptide: Photosystem I P700 chlorophyll a apoprotein A2 (734 aa).

8 helical membrane-spanning segments follow: residues 46–69, 135–158, 175–199, 273–291, 330–353, 369–395, 417–439, and 517–535; these read IFAS…FHVA, LYTG…LHLQ, LNHH…HVAI, IAHH…GHMY, LHFQ…QHIY, AALY…IFFI, AIIS…LYVH, and FLVH…LILV. [4Fe-4S] cluster-binding residues include cysteine 559 and cysteine 568. 2 consecutive transmembrane segments (helical) span residues 575–596 and 643–665; these read AFYL…YWHW and LSVW…MFLI. Residues histidine 654, methionine 662, and tyrosine 670 each coordinate chlorophyll a. Tryptophan 671 lines the phylloquinone pocket. The helical transmembrane segment at 707-727 threads the bilayer; the sequence is LVGLAHFSVGYIFTYAAFLIA.

The protein belongs to the PsaA/PsaB family. As to quaternary structure, the PsaA/B heterodimer binds the P700 chlorophyll special pair and subsequent electron acceptors. PSI consists of a core antenna complex that captures photons, and an electron transfer chain that converts photonic excitation into a charge separation. The eukaryotic PSI reaction center is composed of at least 11 subunits. P700 is a chlorophyll a/chlorophyll a' dimer, A0 is one or more chlorophyll a, A1 is one or both phylloquinones and FX is a shared 4Fe-4S iron-sulfur center. serves as cofactor.

It localises to the plastid. It is found in the chloroplast thylakoid membrane. The enzyme catalyses reduced [plastocyanin] + hnu + oxidized [2Fe-2S]-[ferredoxin] = oxidized [plastocyanin] + reduced [2Fe-2S]-[ferredoxin]. In terms of biological role, psaA and PsaB bind P700, the primary electron donor of photosystem I (PSI), as well as the electron acceptors A0, A1 and FX. PSI is a plastocyanin-ferredoxin oxidoreductase, converting photonic excitation into a charge separation, which transfers an electron from the donor P700 chlorophyll pair to the spectroscopically characterized acceptors A0, A1, FX, FA and FB in turn. Oxidized P700 is reduced on the lumenal side of the thylakoid membrane by plastocyanin. This is Photosystem I P700 chlorophyll a apoprotein A2 from Staurastrum punctulatum (Green alga).